A 433-amino-acid polypeptide reads, in one-letter code: Tol-Pal system protein TolB (433 aa).

An N-terminal signal peptide occupies residues 1–21; that stretch reads MIKRLRGLLVMLCCVAGMAVA.

This sequence belongs to the TolB family. In terms of assembly, the Tol-Pal system is composed of five core proteins: the inner membrane proteins TolA, TolQ and TolR, the periplasmic protein TolB and the outer membrane protein Pal. They form a network linking the inner and outer membranes and the peptidoglycan layer.

The protein resides in the periplasm. Its function is as follows. Part of the Tol-Pal system, which plays a role in outer membrane invagination during cell division and is important for maintaining outer membrane integrity. The sequence is that of Tol-Pal system protein TolB from Pseudomonas putida (strain ATCC 47054 / DSM 6125 / CFBP 8728 / NCIMB 11950 / KT2440).